A 1475-amino-acid chain; its full sequence is Alpha-glucan water dikinase, chloroplastic (1475 aa).

Residues 1–85 constitute a chloroplast transit peptide; the sequence is MSNSIGRNVL…HRPVLITPRA (85 aa). The active-site Tele-phosphohistidine intermediate is the His-1077.

It belongs to the PEP-utilizing enzyme family. In terms of assembly, homodimer. Mg(2+) is required as a cofactor.

The protein resides in the plastid. Its subcellular location is the chloroplast. The catalysed reaction is [(1-&gt;4)-alpha-D-glucosyl](n) + n ATP + n H2O = [(1-&gt;4)-6-phospho-alpha-D-glucosyl](n) + n AMP + n phosphate + 2n H(+). Its function is as follows. Mediates the incorporation of phosphate into starch-like alpha-glucan, mostly at the C-6 position of glucose units. Acts as an overall regulator of starch mobilization. Required for starch degradation, suggesting that the phosphate content of starch regulates its degradability. In Citrus reticulata (Tangerine), this protein is Alpha-glucan water dikinase, chloroplastic (R1).